We begin with the raw amino-acid sequence, 262 residues long: Probable DNA polymerase sliding clamp 1 (262 aa).

Residues 67–86 (KCEHTYELGVNVLNMFKLLR) mediate DNA binding.

Belongs to the PCNA family.

In terms of biological role, sliding clamp subunit. Responsible for tethering the catalytic subunit of DNA polymerase to DNA during high-speed replication. This is Probable DNA polymerase sliding clamp 1 from Chlorella (PBCV-1).